A 283-amino-acid chain; its full sequence is Pre-protein-C8 (283 aa).

A signal peptide (tat-type signal) is located at residues Met-1–Ala-40. A helix-loop-helix (HLH) region region spans residues Ala-61–Gln-75.

As to quaternary structure, immunity protein HalI interacts with Halocin-C8; the interaction is direct. In terms of processing, predicted to be exported by the Tat system. The position of the signal peptide cleavage has not been experimentally proven.

The protein resides in the secreted. Its subcellular location is the cell membrane. Has antibacterial activity against a wide variety of haloarchaeons. Causes cell lysis and death, possibly by disrupting the cell wall. Functionally, acts as an immunity protein for halocin-C8. Able to block the halocin-C8 activity by sequestering the activity of halocin-C8 through specific and direct binding. This is Pre-protein-C8 (proC8) from Halobacterium sp. (strain AS7092).